Here is a 374-residue protein sequence, read N- to C-terminus: UDP-N-acetylglucosamine--N-acetylmuramyl-(pentapeptide) pyrophosphoryl-undecaprenol N-acetylglucosamine transferase (374 aa).

UDP-N-acetyl-alpha-D-glucosamine-binding positions include 13 to 15, N124, R165, S193, and Q294; that span reads TGG.

It belongs to the glycosyltransferase 28 family. MurG subfamily.

It is found in the cell inner membrane. The catalysed reaction is di-trans,octa-cis-undecaprenyl diphospho-N-acetyl-alpha-D-muramoyl-L-alanyl-D-glutamyl-meso-2,6-diaminopimeloyl-D-alanyl-D-alanine + UDP-N-acetyl-alpha-D-glucosamine = di-trans,octa-cis-undecaprenyl diphospho-[N-acetyl-alpha-D-glucosaminyl-(1-&gt;4)]-N-acetyl-alpha-D-muramoyl-L-alanyl-D-glutamyl-meso-2,6-diaminopimeloyl-D-alanyl-D-alanine + UDP + H(+). It functions in the pathway cell wall biogenesis; peptidoglycan biosynthesis. In terms of biological role, cell wall formation. Catalyzes the transfer of a GlcNAc subunit on undecaprenyl-pyrophosphoryl-MurNAc-pentapeptide (lipid intermediate I) to form undecaprenyl-pyrophosphoryl-MurNAc-(pentapeptide)GlcNAc (lipid intermediate II). This chain is UDP-N-acetylglucosamine--N-acetylmuramyl-(pentapeptide) pyrophosphoryl-undecaprenol N-acetylglucosamine transferase, found in Rhizobium rhizogenes (strain K84 / ATCC BAA-868) (Agrobacterium radiobacter).